We begin with the raw amino-acid sequence, 221 residues long: Large ribosomal subunit protein uL4 (221 aa).

The tract at residues 47–77 (GTASTKTRGEVSGGGRKPWIQKHTGRARQGS) is disordered.

This sequence belongs to the universal ribosomal protein uL4 family. In terms of assembly, part of the 50S ribosomal subunit.

In terms of biological role, one of the primary rRNA binding proteins, this protein initially binds near the 5'-end of the 23S rRNA. It is important during the early stages of 50S assembly. It makes multiple contacts with different domains of the 23S rRNA in the assembled 50S subunit and ribosome. Forms part of the polypeptide exit tunnel. The polypeptide is Large ribosomal subunit protein uL4 (Thermosipho melanesiensis (strain DSM 12029 / CIP 104789 / BI429)).